A 142-amino-acid polypeptide reads, in one-letter code: Taurine up-regulated 1 protein (142 aa).

The N-terminal stretch at Met1–Ala40 is a signal peptide. Topologically, residues Arg41–Gly123 are extracellular. A helical transmembrane segment spans residues Ala124 to Met140. The Cytoplasmic portion of the chain corresponds to Pro141–Pro142.

Widely expressed in the adult with highest levels in placenta and testis. Also expressed in a number of embryonic tissues at multiple embryonic stages.

It localises to the nucleus membrane. The protein localises to the mitochondrion membrane. It is found in the cytoplasm. This chain is Taurine up-regulated 1 protein, found in Mus musculus (Mouse).